We begin with the raw amino-acid sequence, 358 residues long: Neutral protease 2 homolog MGYG_02351 (358 aa).

Residues 1–17 form the signal peptide; sequence MQFVALLAALGAPLALA. The propeptide occupies 18 to 183; it reads ASIPAAHNNS…DSPAGVIDKR (166 aa). 2 cysteine pairs are disulfide-bonded: C191–C260 and C267–C285. H309 provides a ligand contact to Zn(2+). Residue E310 is part of the active site. Zn(2+) contacts are provided by H313 and D324.

This sequence belongs to the peptidase M35 family. Requires Zn(2+) as cofactor.

It localises to the secreted. It carries out the reaction Preferential cleavage of bonds with hydrophobic residues in P1'. Also 3-Asn-|-Gln-4 and 8-Gly-|-Ser-9 bonds in insulin B chain.. Secreted metalloproteinase that allows assimilation of proteinaceous substrates. Shows high activities on basic nuclear substrates such as histone and protamine. May be involved in virulence. The protein is Neutral protease 2 homolog MGYG_02351 of Arthroderma gypseum (strain ATCC MYA-4604 / CBS 118893) (Microsporum gypseum).